Reading from the N-terminus, the 327-residue chain is MHPQQLVVSWFSLVLLASPIVAMWELEKNVYVVELDWYPDAPGETVVLTCDTPEEDGITWTSDQSSEVLGSGKTLTIQVKEFGDAGQYTCHKGGEALSRSLLLLHKKEDGIWSTDILKDQKEPKAKSFLKCEAKDYSGHFTCWWLTAISTDLKFSVKSSRGSSDPRGVTCGAALLSAEKVSLEHREYNKYTVECQEGSACPAAEESLLIEVVVEAVHKLKYENYTSSFFIRDIIKPDPPKNLQLRPLKNSRQVEVSWEYPDTWSTPHSYFSLTFCVQVQGKNKREKKLFMDQTSAKVTCHKDANVRVQARDRYYSSFWSEWASVSCS.

The N-terminal stretch at 1-22 is a signal peptide; that stretch reads MHPQQLVVSWFSLVLLASPIVA. The Ig-like C2-type domain occupies 23-106; the sequence is MWELEKNVYV…LSRSLLLLHK (84 aa). C50 and C90 form a disulfide bridge. N223 carries N-linked (GlcNAc...) asparagine glycosylation. The Fibronectin type-III domain occupies 238–327; the sequence is PPKNLQLRPL…WSEWASVSCS (90 aa).

The protein belongs to the IL-12B family. As to quaternary structure, heterodimer with IL12A; disulfide-linked. The heterodimer is known as interleukin IL-12. Heterodimer with IL23A; disulfide-linked. The heterodimer is known as interleukin IL-23. Also secreted as a monomer. Interacts with NBR1; this interaction promotes IL-12 secretion.

It localises to the secreted. In terms of biological role, cytokine that can act as a growth factor for activated T and NK cells, enhance the lytic activity of NK/lymphokine-activated killer cells, and stimulate the production of IFN-gamma by resting PBMC. Functionally, associates with IL23A to form the IL-23 interleukin, a heterodimeric cytokine which functions in innate and adaptive immunity. IL-23 may constitute with IL-17 an acute response to infection in peripheral tissues. IL-23 binds to a heterodimeric receptor complex composed of IL12RB1 and IL23R, activates the Jak-Stat signaling cascade, stimulates memory rather than naive T-cells and promotes production of pro-inflammatory cytokines. IL-23 induces autoimmune inflammation and thus may be responsible for autoimmune inflammatory diseases and may be important for tumorigenesis. The polypeptide is Interleukin-12 subunit beta (IL12B) (Bos taurus (Bovine)).